A 1218-amino-acid chain; its full sequence is Coatomer subunit alpha-3 (1218 aa).

9 WD repeats span residues 7 to 48 (TKSN…DRFD), 49 to 88 (EHDG…CLFT), 91 to 132 (GHLD…AVLT), 133 to 172 (GHNH…KKTV), 202 to 241 (GHDR…AWEV), 246 to 285 (GHMN…GIQT), 288 to 326 (REHD…PAFS), 363 to 404 (SLNQ…AGRT), and 450 to 489 (PLPI…GELQ). The tract at residues 854–893 (AMANGGDGFDAEEGEANEEDGEEGGWDLEDLELPPEAETP) is disordered. Acidic residues predominate over residues 862–888 (FDAEEGEANEEDGEEGGWDLEDLELPP).

As to quaternary structure, oligomeric complex that consists of at least the alpha, beta, beta', gamma, delta, epsilon and zeta subunits.

The protein resides in the cytoplasm. It is found in the golgi apparatus membrane. Its subcellular location is the cytoplasmic vesicle. The protein localises to the COPI-coated vesicle membrane. In terms of biological role, the coatomer is a cytosolic protein complex that binds to dilysine motifs and reversibly associates with Golgi non-clathrin-coated vesicles, which further mediate biosynthetic protein transport from the ER, via the Golgi up to the trans Golgi network. Coatomer complex is required for budding from Golgi membranes, and is essential for the retrograde Golgi-to-ER transport of dilysine-tagged proteins. The protein is Coatomer subunit alpha-3 of Oryza sativa subsp. japonica (Rice).